Consider the following 204-residue polypeptide: Nucleoside triphosphate pyrophosphatase (204 aa).

The active-site Proton acceptor is Asp-79.

Belongs to the Maf family. The cofactor is a divalent metal cation.

The protein resides in the cytoplasm. The enzyme catalyses a ribonucleoside 5'-triphosphate + H2O = a ribonucleoside 5'-phosphate + diphosphate + H(+). It catalyses the reaction a 2'-deoxyribonucleoside 5'-triphosphate + H2O = a 2'-deoxyribonucleoside 5'-phosphate + diphosphate + H(+). In terms of biological role, nucleoside triphosphate pyrophosphatase. May have a dual role in cell division arrest and in preventing the incorporation of modified nucleotides into cellular nucleic acids. This chain is Nucleoside triphosphate pyrophosphatase, found in Trichodesmium erythraeum (strain IMS101).